Consider the following 606-residue polypeptide: Cryptochrome-1 (606 aa).

The 130-residue stretch at 3–132 (VNAVHWFRKG…EVIVRISHTL (130 aa)) folds into the Photolyase/cryptochrome alpha/beta domain. A Glycyl lysine isopeptide (Lys-Gly) (interchain with G-Cter in ubiquitin) cross-link involves residue lysine 11. Positions 50–54 (NRWRF) match the LIR 1 motif. Serine 71 is modified (phosphoserine; by AMPK). Positions 82 to 87 (DVFPRL) match the LIR 2 motif. Lysine 107 is covalently cross-linked (Glycyl lysine isopeptide (Lys-Gly) (interchain with G-Cter in ubiquitin)). Residues 151–156 (KRFQTL) carry the LIR 3 motif. Lysine 159 is covalently cross-linked (Glycyl lysine isopeptide (Lys-Gly) (interchain with G-Cter in ubiquitin)). The residue at position 247 (serine 247) is a Phosphoserine; by MAPK. Serine 252 is an FAD binding site. 2 short sequence motifs (LIR) span residues 255-260 (LRFGCL) and 271-276 (DLYKKV). Position 280 is a phosphoserine; by AMPK (serine 280). Positions 285–290 (SLYGQL) match the LIR 6 motif. Glutamine 289 is an FAD binding site. A Glycyl lysine isopeptide (Lys-Gly) (interchain with G-Cter in ubiquitin) cross-link involves residue lysine 329. The LIR 7 signature appears at 335–339 (TGFPW). Histidine 355 is an FAD binding site. Residues 371-470 (WISWEEGMKV…LIGVNYPKPM (100 aa)) form a required for inhibition of CLOCK-BMAL1-mediated transcription region. The LIR 8 motif lies at 379–384 (KVFEEL). 387-389 (DAD) contacts FAD. 3 short sequence motifs (LIR) span residues 395-400 (GSWMWL), 411-416 (HCYCPV), and 430-435 (RRYLPV). The tract at residues 471–493 (VNHAEASRLNIERMKQIYQQLSR) is interaction with TIMELESS. Lysine 485 is covalently cross-linked (Glycyl lysine isopeptide (Lys-Gly) (interchain with G-Cter in ubiquitin)). Short sequence motifs (LIR) lie at residues 486–491 (QIYQQL) and 492–497 (SRYRGL). Positions 559-606 (YAHGDSQQTHSLKQGRSSAGTGLSSGKRPSQEEDAQSVGPKVQRQSSN) are disordered. Residues 563-586 (DSQQTHSLKQGRSSAGTGLSSGKR) show a composition bias toward polar residues. A Glycyl lysine isopeptide (Lys-Gly) (interchain with G-Cter in ubiquitin) cross-link involves residue lysine 585. A Phosphoserine modification is found at serine 588.

Belongs to the DNA photolyase class-1 family. As to quaternary structure, component of the circadian core oscillator, which includes the CRY proteins, CLOCK or NPAS2, BMAL1 or BMAL2, CSNK1D and/or CSNK1E, TIMELESS, and the PER proteins. Interacts directly with TIMELESS. Interacts directly with PER1 and PER2; interaction with PER2 inhibits its ubiquitination and vice versa. Interacts with PER3. Interacts with FBXL21. Interacts with FBXL3. Interacts with PPP5C (via TPR repeats). Interacts with CLOCK-BMAL1 independently of PER2 and DNA. Interacts with HDAC1, HDAC2 and SIN3B. Interacts with nuclear receptors AR, NR1D1, NR3C1/GR, RORA and RORC; the interaction with at least NR3C1/GR is ligand dependent. Interacts with PRKDC. Interacts with the G protein subunit alpha GNAS; the interaction may block GPCR-mediated regulation of cAMP concentrations. Interacts with PRMT5. Interacts with EZH2. Interacts with MYBBP1A, DOCK7, HNRNPU, RPL7A, RPL8 and RPS3. Interacts with MAP1LC3B. Interacts with CLOCK. Interacts with BMAL1. Interacts weakly with HDAC3; this interaction is enhanced in the presence of FBXL3. Interacts with TRIM28, KCTD5 and DDB1. Interacts with DTL. Interacts with DDB1-CUL4A complex. Interacts with FOXO1. Interacts with PSMD2 in a KDM8-dependent manner. Interacts with KDM8 in a FBXL3-dependent manner. Interacts with PPARA. Interacts with PPARG in a ligand-dependent manner. Interacts with PPARD (via domain NR LBD) in a ligand-dependent manner. Interacts with NR1I2 (via domain NR LBD) in a ligand-dependent manner. Interacts with NR1I3, VDR and HNF4A. The cofactor is FAD. (6R)-5,10-methylene-5,6,7,8-tetrahydrofolate serves as cofactor. Post-translationally, phosphorylation on Ser-247 by MAPK is important for the inhibition of CLOCK-BMAL1-mediated transcriptional activity. Phosphorylation by CSNK1E requires interaction with PER1 or PER2. Phosphorylation at Ser-71 and Ser-280 by AMPK decreases protein stability. Phosphorylation at Ser-588 exhibits a robust circadian rhythm with a peak at CT8, increases protein stability, prevents SCF(FBXL3)-mediated degradation and is antagonized by interaction with PRKDC. In terms of processing, ubiquitinated by the SCF(FBXL3) and SCF(FBXL21) complexes, regulating the balance between degradation and stabilization. The SCF(FBXL3) complex is mainly nuclear and mediates ubiquitination and subsequent degradation of CRY1. In contrast, cytoplasmic SCF(FBXL21) complex-mediated ubiquitination leads to stabilize CRY1 and counteract the activity of the SCF(FBXL3) complex. The SCF(FBXL3) and SCF(FBXL21) complexes probably mediate ubiquitination at different Lys residues. Ubiquitination at Lys-11 and Lys-107 are specifically ubiquitinated by the SCF(FBXL21) complex but not by the SCF(FBXL3) complex. Ubiquitination may be inhibited by PER2. Deubiquitinated by USP7. Undergoes autophagy-mediated degradation in the liver in a time-dependent manner. Autophagic degradation of CRY1 (an inhibitor of gluconeogenesis) occurs during periods of reduced feeding allowing induction of gluconeogenesis and maintenance of blood glucose levels. In terms of tissue distribution, expressed in cones, amacrine cells, and retinal ganglion cells of the retina (at protein level). Expressed in all tissues examined including heart, brain, spleen, lung, liver, skeletal muscle, kidney and testis. Higher levels in brain, liver and testis. In the retina, highly expressed in the ganglion cell layer (GCL) and in the inner nuclear layer (INL). Evenly distributed in central and peripheral retina. In the brain, highly expressed in the suprachiasmatic nucleus (SCN). High levels in cerebral cortical layers particularly in the pyramidial cell layer of the hippocampus, the granular cell layer of the dentate gyrus (DG) and the pyramidal cell layer of the piriform cortex (PFC).

It is found in the cytoplasm. The protein resides in the nucleus. KL001 (N-[3-(9H-carbazol-9-yl)-2-hydroxypropyl]-N-(2-furanylmethyl)-methanesulfonamide) binds to CRY1 and stabilizes it by inhibiting FBXL3- and ubiquitin-dependent degradation of CRY1 resulting in lengthening of the circadian periods. KL001-mediated CRY1 stabilization can inhibit glucagon-induced gluconeogenesis in primary hepatocytes. In terms of biological role, transcriptional repressor which forms a core component of the circadian clock. The circadian clock, an internal time-keeping system, regulates various physiological processes through the generation of approximately 24 hour circadian rhythms in gene expression, which are translated into rhythms in metabolism and behavior. It is derived from the Latin roots 'circa' (about) and 'diem' (day) and acts as an important regulator of a wide array of physiological functions including metabolism, sleep, body temperature, blood pressure, endocrine, immune, cardiovascular, and renal function. Consists of two major components: the central clock, residing in the suprachiasmatic nucleus (SCN) of the brain, and the peripheral clocks that are present in nearly every tissue and organ system. Both the central and peripheral clocks can be reset by environmental cues, also known as Zeitgebers (German for 'timegivers'). The predominant Zeitgeber for the central clock is light, which is sensed by retina and signals directly to the SCN. The central clock entrains the peripheral clocks through neuronal and hormonal signals, body temperature and feeding-related cues, aligning all clocks with the external light/dark cycle. Circadian rhythms allow an organism to achieve temporal homeostasis with its environment at the molecular level by regulating gene expression to create a peak of protein expression once every 24 hours to control when a particular physiological process is most active with respect to the solar day. Transcription and translation of core clock components (CLOCK, NPAS2, BMAL1, BMAL2, PER1, PER2, PER3, CRY1 and CRY2) plays a critical role in rhythm generation, whereas delays imposed by post-translational modifications (PTMs) are important for determining the period (tau) of the rhythms (tau refers to the period of a rhythm and is the length, in time, of one complete cycle). A diurnal rhythm is synchronized with the day/night cycle, while the ultradian and infradian rhythms have a period shorter and longer than 24 hours, respectively. Disruptions in the circadian rhythms contribute to the pathology of cardiovascular diseases, cancer, metabolic syndromes and aging. A transcription/translation feedback loop (TTFL) forms the core of the molecular circadian clock mechanism. Transcription factors, CLOCK or NPAS2 and BMAL1 or BMAL2, form the positive limb of the feedback loop, act in the form of a heterodimer and activate the transcription of core clock genes and clock-controlled genes (involved in key metabolic processes), harboring E-box elements (5'-CACGTG-3') within their promoters. The core clock genes: PER1/2/3 and CRY1/2 which are transcriptional repressors form the negative limb of the feedback loop and interact with the CLOCK|NPAS2-BMAL1|BMAL2 heterodimer inhibiting its activity and thereby negatively regulating their own expression. This heterodimer also activates nuclear receptors NR1D1/2 and RORA/B/G, which form a second feedback loop and which activate and repress BMAL1 transcription, respectively. CRY1 and CRY2 have redundant functions but also differential and selective contributions at least in defining the pace of the SCN circadian clock and its circadian transcriptional outputs. More potent transcriptional repressor in cerebellum and liver than CRY2, though more effective in lengthening the period of the SCN oscillator. On its side, CRY2 seems to play a critical role in tuning SCN circadian period by opposing the action of CRY1. With CRY2, is dispensable for circadian rhythm generation but necessary for the development of intercellular networks for rhythm synchrony. Capable of translocating circadian clock core proteins such as PER proteins to the nucleus. Interacts with CLOCK-BMAL1 independently of PER proteins and is found at CLOCK-BMAL1-bound sites, suggesting that CRY may act as a molecular gatekeeper to maintain CLOCK-BMAL1 in a poised and repressed state until the proper time for transcriptional activation. Represses the CLOCK-BMAL1 induced transcription of BHLHE40/DEC1, ATF4, MTA1, KLF10 and NAMPT. May repress circadian target genes expression in collaboration with HDAC1 and HDAC2 through histone deacetylation. Mediates the clock-control activation of ATR and modulates ATR-mediated DNA damage checkpoint. In liver, mediates circadian regulation of cAMP signaling and gluconeogenesis by binding to membrane-coupled G proteins and blocking glucagon-mediated increases in intracellular cAMP concentrations and CREB1 phosphorylation. Inhibits hepatic gluconeogenesis by decreasing nuclear FOXO1 levels that down-regulates gluconeogenic gene expression. Besides its role in the maintenance of the circadian clock, is also involved in the regulation of other processes. Represses glucocorticoid receptor NR3C1/GR-induced transcriptional activity by binding to glucocorticoid response elements (GREs). Plays a key role in glucose and lipid metabolism modulation, in part, through the transcriptional regulation of genes involved in these pathways, such as LEP or ACSL4. Represses PPARD and its target genes in the skeletal muscle and limits exercise capacity. Plays an essential role in the generation of circadian rhythms in the retina. Represses the transcriptional activity of NR1I2. The chain is Cryptochrome-1 (Cry1) from Mus musculus (Mouse).